The chain runs to 41 residues: Inducible serine protease inhibitor 3 (41 aa).

Its function is as follows. Inhibits trypsin and the toxin proteases PR1 and PR2 of M.anisopliae. Does not inhibit chymotrypsin, subtilisin Carlsberg, proteinase K and porcine pancreatic elastase. This Galleria mellonella (Greater wax moth) protein is Inducible serine protease inhibitor 3.